A 59-amino-acid polypeptide reads, in one-letter code: Large ribosomal subunit protein bL35 (59 aa).

The segment covering 17–43 (GQIKRKHAYTSHLAPHKSTKQKRHLRK) has biased composition (basic residues). A disordered region spans residues 17 to 47 (GQIKRKHAYTSHLAPHKSTKQKRHLRKQATV).

It belongs to the bacterial ribosomal protein bL35 family.

In Mycoplasma genitalium (strain ATCC 33530 / DSM 19775 / NCTC 10195 / G37) (Mycoplasmoides genitalium), this protein is Large ribosomal subunit protein bL35.